The chain runs to 522 residues: DEAD-box ATP-dependent RNA helicase 1 (522 aa).

Positions 30–59 match the Q motif motif; the sequence is CALDTLPCLNPKLKKALENMGISSLFPVQV. The region spanning 66-297 is the Helicase ATP-binding domain; the sequence is IGPGGFERDI…QLDLHHPLFM (232 aa). Position 79 to 86 (79 to 86) interacts with ATP; it reads SPTGSGKT. The short motif at 207-210 is the DEAD box element; that stretch reads DETD. Residues 325–475 enclose the Helicase C-terminal domain; it reads YLVALLKSWE…PIPPTSLDSI (151 aa). The disordered stretch occupies residues 490 to 522; that stretch reads VESEAPKKGRQAFRHNSRTGNSQTKLNKPRSEA. Residues 497–506 show a composition bias toward basic residues; it reads KGRQAFRHNS.

It belongs to the DEAD box helicase family. DDX51/DBP6 subfamily.

It catalyses the reaction ATP + H2O = ADP + phosphate + H(+). In Arabidopsis thaliana (Mouse-ear cress), this protein is DEAD-box ATP-dependent RNA helicase 1 (RH1).